The following is a 385-amino-acid chain: Putative transport protein BpOF4_00890 (385 aa).

Transmembrane regions (helical) follow at residues 42-62 (TIWI…ILPV), 63-83 (SLPL…VNAL), 93-113 (VAVM…GYYI), 191-211 (SIPG…LFML), 255-275 (IIIF…VALL), 276-296 (MAFI…VILA), 304-324 (IVGD…LLII), and 350-370 (LGLM…VIAF).

This sequence belongs to the autoinducer-2 exporter (AI-2E) (TC 2.A.86) family.

It is found in the cell membrane. The chain is Putative transport protein BpOF4_00890 from Alkalihalophilus pseudofirmus (strain ATCC BAA-2126 / JCM 17055 / OF4) (Bacillus pseudofirmus).